The chain runs to 81 residues: MSADEVYSRVRKIVSDQLGVEDDKVTLEANFQNDLGADSLDTVELVMAFEEEFDLEIPDEDAEGIATVQDAVNYILSKKAA.

Positions 4-79 constitute a Carrier domain; sequence DEVYSRVRKI…DAVNYILSKK (76 aa). At S39 the chain carries O-(pantetheine 4'-phosphoryl)serine.

It belongs to the acyl carrier protein (ACP) family. In terms of processing, 4'-phosphopantetheine is transferred from CoA to a specific serine of apo-ACP by AcpS. This modification is essential for activity because fatty acids are bound in thioester linkage to the sulfhydryl of the prosthetic group.

The protein resides in the cytoplasm. It participates in lipid metabolism; fatty acid biosynthesis. Functionally, carrier of the growing fatty acid chain in fatty acid biosynthesis. The sequence is that of Acyl carrier protein from Synechococcus sp. (strain JA-3-3Ab) (Cyanobacteria bacterium Yellowstone A-Prime).